The primary structure comprises 462 residues: Gamma-glutamylethanolamide synthetase GlnA4 (462 aa).

One can recognise a GS beta-grasp domain in the interval 30 to 126; the sequence is GDIDTVVLAF…AVADLAWEDG (97 aa). The GS catalytic domain occupies 133 to 462; the sequence is PRQILRRQLE…WELRRSFERM (330 aa). Mg(2+) contacts are provided by Glu-156 and Glu-158. Residue Glu-214 participates in ATP binding. Glu-219 and Glu-226 together coordinate Mg(2+). L-glutamate is bound at residue Gly-270. His-274 serves as a coordination point for Mg(2+). 276 to 278 lines the ATP pocket; sequence HLS. 2 residues coordinate L-glutamate: Arg-325 and Arg-343. ATP-binding residues include Arg-343 and Arg-348. A Mg(2+)-binding site is contributed by Glu-359. Position 361 (Arg-361) interacts with L-glutamate.

Belongs to the glutamine synthetase family. Mg(2+) serves as cofactor.

The catalysed reaction is ethanolamine + L-glutamate + ATP = gamma-L-glutamylethanolamide + ADP + phosphate + H(+). It functions in the pathway amine and polyamine degradation; ethanolamine degradation. Very slightly decreased activity with glutamine synthetase (GS) inhibitor methionine sulfoximine (MSO). Involved in the catabolism of monoamine ethanolamine. Catalyzes the ATP-dependent gamma-glutamylation of ethanolamine. No activity with polyamines. No complementation of the L-glutamine auxotrophy of an E.coli glnA mutant. Enables survival of S.coelicolor under high local environmental ethanolamine conditions. May play a role during starvation conditions to limit intracellular ethanolamine concentration, which in excess is toxic to the cells. This is Gamma-glutamylethanolamide synthetase GlnA4 from Streptomyces coelicolor (strain ATCC BAA-471 / A3(2) / M145).